A 349-amino-acid polypeptide reads, in one-letter code: MMAKTKGSYEVFHYTVTKDKVNKGLCDIARYFVPEYRNSKDEDLTIQKLNGGITNVLYLVEDKNIEQKYRYLPVVIRLYGYKSEEIIDRKNELIIQTEADQNGLGAKFYGLFDNGCIYGFIKGEPLAYEDISKPTMQTCIAKEIAQWHSIEMPTRKNPSLWPTIKKWAALAPDVYPVPEKNEYYQSINVKKMIEEGKMLEQRLAQLNSPIVFCHNDLLSGNIIYDPSQNCASFIDFEYANYNFRGLELGNHFNEYAGFGPDYSLYPNKESQIHFLTDYHRSLFKTEPTQDELEKLYIESNQFSLASHLYWGFWAIVQAMNSQIDFDYLEYGKARFDRYYETRDQFLNLN.

The protein belongs to the choline/ethanolamine kinase family.

The protein resides in the cytoplasm. The enzyme catalyses ethanolamine + ATP = phosphoethanolamine + ADP + H(+). It participates in phospholipid metabolism; phosphatidylethanolamine biosynthesis; phosphatidylethanolamine from ethanolamine: step 1/3. Highly specific for ethanolamine phosphorylation. May be a rate-controlling step in phosphatidylethanolamine biosynthesis. The chain is Probable ethanolamine kinase A (etnkA) from Dictyostelium discoideum (Social amoeba).